Reading from the N-terminus, the 195-residue chain is Recombination protein RecR (195 aa).

The C4-type zinc finger occupies 53-68 (CTICHNLDTISPCSIC). The 96-residue stretch at 76–171 (SIICVVEELG…KVTRLACGIP (96 aa)) folds into the Toprim domain.

It belongs to the RecR family.

Its function is as follows. May play a role in DNA repair. It seems to be involved in an RecBC-independent recombinational process of DNA repair. It may act with RecF and RecO. This chain is Recombination protein RecR, found in Anaplasma marginale (strain St. Maries).